The following is a 1005-amino-acid chain: Retinoblastoma-related protein (1005 aa).

Residues 404–605 (TPVSTAMTTA…EKGSSMYNSL (202 aa)) form a domain A region. Positions 404–853 (TPVSTAMTTA…NEIFIPSVKP (450 aa)) are pocket. Positions 606 to 722 (TIARPNLSNE…HPTRGETCAE (117 aa)) are spacer. The tract at residues 723-853 (TAVNLFFSKI…NEIFIPSVKP (131 aa)) is domain B. The segment covering 863–873 (VPKNPNNQVSE) has biased composition (polar residues). Positions 863–899 (VPKNPNNQVSETNKKDESGPCPCPGSPKVSSFPSLPD) are disordered.

This sequence belongs to the retinoblastoma protein (RB) family.

It is found in the nucleus. In terms of biological role, regulator of biological processes that recruits a histone deacetylase to control gene transcription. May play a role in the entry into mitosis, negatively regulating the cell proliferation. Formation of stable complexes with geminiviridae replication-associated proteins may create a cellular environment which favors viral DNA replication. This chain is Retinoblastoma-related protein (RBR), found in Pilosella piloselloides (Glaucous king-devil hawkweed).